Reading from the N-terminus, the 89-residue chain is Gallinacin-13 (89 aa).

The N-terminal stretch at 1–23 (MRILQLLFAIVVILLLQDAPARG) is a signal peptide. Intrachain disulfides connect Cys-30/Cys-58, Cys-37/Cys-51, and Cys-41/Cys-59. The disordered stretch occupies residues 66–89 (PFSNPKHSVLHTAEQDPSPSLGGT).

This sequence belongs to the beta-defensin family. Expressed in the liver, gall bladder, kidney, small intestine, spleen, testis, ovary and male and female reproductive tracts. Not detected in the ovarian stroma and the theca and granulosa layers of the ovarian follicle.

The protein localises to the secreted. It is found in the cytoplasmic granule. In terms of biological role, has bactericidal activity. Potent activity against E.coli, L.monocytogenes, S.typhimurium and S.pyogenes but mot against S.aureus. Functionally, has bactericidal activity. The chain is Gallinacin-13 (GAL13) from Gallus gallus (Chicken).